Reading from the N-terminus, the 280-residue chain is Phosphatidylserine decarboxylase proenzyme (280 aa).

Catalysis depends on charge relay system; for autoendoproteolytic cleavage activity residues Asp88, His144, and Ser247. Ser247 serves as the catalytic Schiff-base intermediate with substrate; via pyruvic acid; for decarboxylase activity. At Ser247 the chain carries Pyruvic acid (Ser); by autocatalysis.

It belongs to the phosphatidylserine decarboxylase family. PSD-B subfamily. Prokaryotic type I sub-subfamily. Heterodimer of a large membrane-associated beta subunit and a small pyruvoyl-containing alpha subunit. It depends on pyruvate as a cofactor. In terms of processing, is synthesized initially as an inactive proenzyme. Formation of the active enzyme involves a self-maturation process in which the active site pyruvoyl group is generated from an internal serine residue via an autocatalytic post-translational modification. Two non-identical subunits are generated from the proenzyme in this reaction, and the pyruvate is formed at the N-terminus of the alpha chain, which is derived from the carboxyl end of the proenzyme. The autoendoproteolytic cleavage occurs by a canonical serine protease mechanism, in which the side chain hydroxyl group of the serine supplies its oxygen atom to form the C-terminus of the beta chain, while the remainder of the serine residue undergoes an oxidative deamination to produce ammonia and the pyruvoyl prosthetic group on the alpha chain. During this reaction, the Ser that is part of the protease active site of the proenzyme becomes the pyruvoyl prosthetic group, which constitutes an essential element of the active site of the mature decarboxylase.

It is found in the cell membrane. The enzyme catalyses a 1,2-diacyl-sn-glycero-3-phospho-L-serine + H(+) = a 1,2-diacyl-sn-glycero-3-phosphoethanolamine + CO2. Its pathway is phospholipid metabolism; phosphatidylethanolamine biosynthesis; phosphatidylethanolamine from CDP-diacylglycerol: step 2/2. Catalyzes the formation of phosphatidylethanolamine (PtdEtn) from phosphatidylserine (PtdSer). The chain is Phosphatidylserine decarboxylase proenzyme from Xanthomonas euvesicatoria pv. vesicatoria (strain 85-10) (Xanthomonas campestris pv. vesicatoria).